The sequence spans 77 residues: MSCCGGNCGCGSSCKCGSGCGGCKMYADLSYTESTTSETLIMGVGSEKAQYESAEMGAENDGCKCGANCTCNPCTCK.

Belongs to the metallothionein superfamily. Type 15 family. Expressed in the left, stem and flower, at very low levels in roots and is not detectable in mesophyll protoplasts.

Metallothioneins have a high content of cysteine residues that bind various heavy metals. The polypeptide is Metallothionein-like protein type 2 (MTI) (Vicia faba (Broad bean)).